We begin with the raw amino-acid sequence, 179 residues long: Large ribosomal subunit protein uL5 (179 aa).

The protein belongs to the universal ribosomal protein uL5 family. Part of the 50S ribosomal subunit; part of the 5S rRNA/L5/L18/L25 subcomplex. Contacts the 5S rRNA and the P site tRNA. Forms a bridge to the 30S subunit in the 70S ribosome.

This is one of the proteins that bind and probably mediate the attachment of the 5S RNA into the large ribosomal subunit, where it forms part of the central protuberance. In the 70S ribosome it contacts protein S13 of the 30S subunit (bridge B1b), connecting the 2 subunits; this bridge is implicated in subunit movement. Contacts the P site tRNA; the 5S rRNA and some of its associated proteins might help stabilize positioning of ribosome-bound tRNAs. This Vibrio campbellii (strain ATCC BAA-1116) protein is Large ribosomal subunit protein uL5.